The primary structure comprises 246 residues: 1-(5-phosphoribosyl)-5-[(5-phosphoribosylamino)methylideneamino] imidazole-4-carboxamide isomerase (246 aa).

Asp-8 acts as the Proton acceptor in catalysis. Asp-131 serves as the catalytic Proton donor.

It belongs to the HisA/HisF family.

The protein resides in the cytoplasm. It catalyses the reaction 1-(5-phospho-beta-D-ribosyl)-5-[(5-phospho-beta-D-ribosylamino)methylideneamino]imidazole-4-carboxamide = 5-[(5-phospho-1-deoxy-D-ribulos-1-ylimino)methylamino]-1-(5-phospho-beta-D-ribosyl)imidazole-4-carboxamide. It participates in amino-acid biosynthesis; L-histidine biosynthesis; L-histidine from 5-phospho-alpha-D-ribose 1-diphosphate: step 4/9. This is 1-(5-phosphoribosyl)-5-[(5-phosphoribosylamino)methylideneamino] imidazole-4-carboxamide isomerase from Lactococcus lactis subsp. cremoris (strain SK11).